The chain runs to 129 residues: NADH-quinone oxidoreductase subunit A (129 aa).

Helical transmembrane passes span 9–29, 68–88, and 97–117; these read FPIGVVLLVAVVLAFTMLGLA, LLFIVFDIEAIFLYPWAVLLL, and LGWPGFVSMGIFVFTLVAGLV.

Belongs to the complex I subunit 3 family. As to quaternary structure, NDH-1 is composed of 14 different subunits. Subunits NuoA, H, J, K, L, M, N constitute the membrane sector of the complex.

It is found in the cell inner membrane. It carries out the reaction a quinone + NADH + 5 H(+)(in) = a quinol + NAD(+) + 4 H(+)(out). In terms of biological role, NDH-1 shuttles electrons from NADH, via FMN and iron-sulfur (Fe-S) centers, to quinones in the respiratory chain. The immediate electron acceptor for the enzyme in this species is believed to be ubiquinone. Couples the redox reaction to proton translocation (for every two electrons transferred, four hydrogen ions are translocated across the cytoplasmic membrane), and thus conserves the redox energy in a proton gradient. In Anaeromyxobacter sp. (strain K), this protein is NADH-quinone oxidoreductase subunit A.